The chain runs to 319 residues: Mitochondrial fission regulator 1-like (319 aa).

Residues 1–35 (MASLGAGAEPESVLFGKDGTEACESPEGRRSGRRK) form a disordered region.

It belongs to the MTFR1 family.

Its subcellular location is the mitochondrion outer membrane. Mitochondrial protein required for adaptation of miochondrial dynamics to metabolic changes. Regulates mitochondrial morphology at steady state and mediates AMPK-dependent stress-induced mitochondrial fragmentation via the control of OPA1 levels. This Xenopus tropicalis (Western clawed frog) protein is Mitochondrial fission regulator 1-like (mtfr1l).